Consider the following 1013-residue polypeptide: Antigenic heat-stable 120 kDa protein (1013 aa).

2 disordered regions span residues 1-73 and 348-396; these read DTSE…TSDP and GQSK…PQSQ. The span at 12 to 27 shows a compositional bias: basic and acidic residues; it reads EYTEEQKQKLEQEQKE. A compositionally biased stretch (low complexity) spans 47-61; sequence SASSAQSTPSISALS. 3 stretches are compositionally biased toward polar residues: residues 62–73, 348–373, and 380–396; these read GNISPDSQTSDP, GQSK…QYKQ, and PTNQ…PQSQ.

The protein resides in the cytoplasm. In Rickettsia rhipicephali, this protein is Antigenic heat-stable 120 kDa protein (sca4).